Consider the following 588-residue polypeptide: DNA mismatch repair protein MutL (588 aa).

This sequence belongs to the DNA mismatch repair MutL/HexB family.

This protein is involved in the repair of mismatches in DNA. It is required for dam-dependent methyl-directed DNA mismatch repair. May act as a 'molecular matchmaker', a protein that promotes the formation of a stable complex between two or more DNA-binding proteins in an ATP-dependent manner without itself being part of a final effector complex. The chain is DNA mismatch repair protein MutL from Fervidobacterium nodosum (strain ATCC 35602 / DSM 5306 / Rt17-B1).